A 457-amino-acid chain; its full sequence is Glycine receptor subunit alpha-1 (457 aa).

Positions 1–28 are cleaved as a signal peptide; that stretch reads MYSFNTLRLYLWETIVFFSLAASKEAEA. Over 29-250 the chain is Extracellular; that stretch reads ARSAPKPMSP…RFHLERQMGY (222 aa). N-linked (GlcNAc...) asparagine glycosylation occurs at asparagine 66. Glycine-binding residues include arginine 93 and serine 157. The cysteines at positions 166 and 180 are disulfide-linked. Zn(2+) is bound by residues glutamate 220 and aspartate 222. Residues cysteine 226 and cysteine 237 are joined by a disulfide bond. 230 to 235 is a strychnine binding site; sequence YNTGKF. Threonine 232 lines the glycine pocket. Histidine 243 is a Zn(2+) binding site. The chain crosses the membrane as a helical span at residues 251 to 272; that stretch reads YLIQMYIPSLLIVILSWISFWI. Topologically, residues 273–277 are cytoplasmic; the sequence is NMDAA. A helical membrane pass occupies residues 278–298; that stretch reads PARVGLGITTVLTMTTQSSGS. The Extracellular portion of the chain corresponds to 299–309; it reads RASLPKVSYVK. Residues 310–330 form a helical membrane-spanning segment; that stretch reads AIDIWMAVCLLFVFSALLEYA. Residues 331-425 lie on the Cytoplasmic side of the membrane; sequence AVNFVSRQHK…FIQRAKKIDK (95 aa). The interval 391–410 is disordered; it reads KGANNSNTTNPPPAPSKSPE. Residues 426–446 traverse the membrane as a helical segment; that stretch reads ISRIGFPMAFLIFNMFYWIIY. The Extracellular segment spans residues 447–457; the sequence is KIVRREDVHNQ.

Belongs to the ligand-gated ion channel (TC 1.A.9) family. Glycine receptor (TC 1.A.9.3) subfamily. GLRA1 sub-subfamily. Interacts with GLRB to form heteropentameric channels; this is probably the predominant form in vivo. Heteropentamer composed of four GLRA1 subunits and one GLRB subunit. Heteropentamer composed of two GLRA1 and three GLRB. Heteropentamer composed of three GLRA1 and two GLRB. Homopentamer (in vitro). Both homopentamers and heteropentamers form functional ion channels, but their characteristics are subtly different.

The protein resides in the postsynaptic cell membrane. The protein localises to the synapse. Its subcellular location is the perikaryon. It is found in the cell projection. It localises to the dendrite. The protein resides in the cell membrane. The catalysed reaction is chloride(in) = chloride(out). Channel opening is triggered by extracellular glycine. Channel characteristics depend on the subunit composition; heteropentameric channels are activated by lower glycine levels and display faster desensitization. Channel opening is also triggered by taurine and beta-alanine. Channel activity is potentiated by nanomolar concentrations of Zn(2+); half-maximal activation is observed with 37 nM Zn(2+). Inhibited by higher Zn(2+) levels; haf-maximal inhibition occurs at 20 uM Zn(2+). Inhibited by strychnine. Strychnine binding locks the channel in a closed conformation and prevents channel opening in response to extracellular glycine. Inhibited by lindane. Inhibited by picrotoxin. Its function is as follows. Subunit of heteromeric glycine-gated chloride channels. Plays an important role in the down-regulation of neuronal excitability. Contributes to the generation of inhibitory postsynaptic currents. Channel activity is potentiated by ethanol. Potentiation of channel activity by intoxicating levels of ethanol contribute to the sedative effects of ethanol. The sequence is that of Glycine receptor subunit alpha-1 (GLRA1) from Homo sapiens (Human).